Here is a 352-residue protein sequence, read N- to C-terminus: Geranylgeranyl transferase type-1 subunit beta (352 aa).

PFTB repeat units follow at residues 135-180 (VNKK…FILD), 187-228 (KESA…SLLG), 236-276 (FKEQ…MMID), and 283-325 (FASI…SFGN). Residues 213-215 (HGG) and 255-258 (RTNK) contribute to the geranylgeranyl diphosphate site. 2 residues coordinate Zn(2+): Asp-261 and Cys-263. 264 to 267 (YAFW) contacts geranylgeranyl diphosphate. Residue His-313 participates in Zn(2+) binding.

The protein belongs to the protein prenyltransferase subunit beta family. As to quaternary structure, heterodimer of an alpha and a beta subunit. Requires Zn(2+) as cofactor. Mg(2+) is required as a cofactor.

It catalyses the reaction geranylgeranyl diphosphate + L-cysteinyl-[protein] = S-geranylgeranyl-L-cysteinyl-[protein] + diphosphate. Functionally, catalyzes the transfer of a geranyl-geranyl moiety from geranyl-geranyl pyrophosphate to a cysteine at the fourth position from the C-terminus of proteins having the C-terminal sequence Cys-aliphatic-aliphatic-X. The chain is Geranylgeranyl transferase type-1 subunit beta (pggt1b) from Dictyostelium discoideum (Social amoeba).